The following is a 329-amino-acid chain: GTP 3',8-cyclase (329 aa).

Positions 8–234 (AFARKYYYLR…QLRQRSDGPA (227 aa)) constitute a Radical SAM core domain. Arg17 contacts GTP. The [4Fe-4S] cluster site is built by Cys24 and Cys28. Position 30 (Tyr30) interacts with S-adenosyl-L-methionine. Cys31 provides a ligand contact to [4Fe-4S] cluster. Arg68 lines the GTP pocket. Gly72 contacts S-adenosyl-L-methionine. Thr99 serves as a coordination point for GTP. Ser123 is a binding site for S-adenosyl-L-methionine. Lys160 serves as a coordination point for GTP. Residue Met194 participates in S-adenosyl-L-methionine binding. Residues Cys257 and Cys260 each contribute to the [4Fe-4S] cluster site. 262–264 (RLR) contributes to the GTP binding site. Cys274 contacts [4Fe-4S] cluster.

This sequence belongs to the radical SAM superfamily. MoaA family. Monomer and homodimer. [4Fe-4S] cluster is required as a cofactor.

The enzyme catalyses GTP + AH2 + S-adenosyl-L-methionine = (8S)-3',8-cyclo-7,8-dihydroguanosine 5'-triphosphate + 5'-deoxyadenosine + L-methionine + A + H(+). It participates in cofactor biosynthesis; molybdopterin biosynthesis. Functionally, catalyzes the cyclization of GTP to (8S)-3',8-cyclo-7,8-dihydroguanosine 5'-triphosphate. This is GTP 3',8-cyclase from Escherichia coli O17:K52:H18 (strain UMN026 / ExPEC).